A 90-amino-acid polypeptide reads, in one-letter code: Probable Fe(2+)-trafficking protein (90 aa).

It belongs to the Fe(2+)-trafficking protein family. In terms of assembly, monomer.

Its function is as follows. Could be a mediator in iron transactions between iron acquisition and iron-requiring processes, such as synthesis and/or repair of Fe-S clusters in biosynthetic enzymes. This Pectobacterium carotovorum subsp. carotovorum (strain PC1) protein is Probable Fe(2+)-trafficking protein.